Consider the following 126-residue polypeptide: Fluoride-specific ion channel FluC (126 aa).

Helical transmembrane passes span 6–26 (FLAV…LAIL), 36–56 (YGTL…VGFF), 69–89 (LVIT…GEVV), and 99–119 (IGVL…MLGF). The Na(+) site is built by glycine 76 and threonine 79.

Belongs to the fluoride channel Fluc/FEX (TC 1.A.43) family.

Its subcellular location is the cell inner membrane. It catalyses the reaction fluoride(in) = fluoride(out). Its activity is regulated as follows. Na(+) is not transported, but it plays an essential structural role and its presence is essential for fluoride channel function. Its function is as follows. Fluoride-specific ion channel. Important for reducing fluoride concentration in the cell, thus reducing its toxicity. The chain is Fluoride-specific ion channel FluC from Ralstonia pickettii (strain 12J).